The chain runs to 315 residues: Lipoyl synthase (315 aa).

Residues Cys63, Cys68, Cys74, Cys89, Cys93, Cys96, and Ser303 each contribute to the [4Fe-4S] cluster site. The Radical SAM core domain maps to 75–292 (FSHGTATFMI…EKKAYDMGFR (218 aa)).

This sequence belongs to the radical SAM superfamily. Lipoyl synthase family. [4Fe-4S] cluster serves as cofactor.

Its subcellular location is the cytoplasm. The catalysed reaction is [[Fe-S] cluster scaffold protein carrying a second [4Fe-4S](2+) cluster] + N(6)-octanoyl-L-lysyl-[protein] + 2 oxidized [2Fe-2S]-[ferredoxin] + 2 S-adenosyl-L-methionine + 4 H(+) = [[Fe-S] cluster scaffold protein] + N(6)-[(R)-dihydrolipoyl]-L-lysyl-[protein] + 4 Fe(3+) + 2 hydrogen sulfide + 2 5'-deoxyadenosine + 2 L-methionine + 2 reduced [2Fe-2S]-[ferredoxin]. It participates in protein modification; protein lipoylation via endogenous pathway; protein N(6)-(lipoyl)lysine from octanoyl-[acyl-carrier-protein]: step 2/2. Functionally, catalyzes the radical-mediated insertion of two sulfur atoms into the C-6 and C-8 positions of the octanoyl moiety bound to the lipoyl domains of lipoate-dependent enzymes, thereby converting the octanoylated domains into lipoylated derivatives. This Laribacter hongkongensis (strain HLHK9) protein is Lipoyl synthase.